A 374-amino-acid polypeptide reads, in one-letter code: tRNA-specific 2-thiouridylase MnmA (374 aa).

ATP contacts are provided by residues 13 to 20 and M39; that span reads GMSGGVDS. Residues 99-101 are interaction with target base in tRNA; the sequence is NPD. The active-site Nucleophile is the C104. C104 and C201 are disulfide-bonded. G128 is an ATP binding site. An interaction with tRNA region spans residues 151 to 153; it reads KDQ. Residue C201 is the Cysteine persulfide intermediate of the active site. The segment at 313 to 314 is interaction with tRNA; that stretch reads RY.

Belongs to the MnmA/TRMU family.

Its subcellular location is the cytoplasm. The catalysed reaction is S-sulfanyl-L-cysteinyl-[protein] + uridine(34) in tRNA + AH2 + ATP = 2-thiouridine(34) in tRNA + L-cysteinyl-[protein] + A + AMP + diphosphate + H(+). Its function is as follows. Catalyzes the 2-thiolation of uridine at the wobble position (U34) of tRNA, leading to the formation of s(2)U34. This is tRNA-specific 2-thiouridylase MnmA from Streptococcus suis (strain 98HAH33).